The sequence spans 98 residues: NADH-ubiquinone oxidoreductase chain 4L (98 aa).

3 consecutive transmembrane segments (helical) span residues 1-21, 29-49, and 61-81; these read MPYIYTNLFLAFLTSLLGMLI, SLLCLEGMMLSMFIMTSLTIL, and IILLVFAACEAAVGLALLVMV.

This sequence belongs to the complex I subunit 4L family. In terms of assembly, core subunit of respiratory chain NADH dehydrogenase (Complex I) which is composed of 45 different subunits.

The protein localises to the mitochondrion inner membrane. The catalysed reaction is a ubiquinone + NADH + 5 H(+)(in) = a ubiquinol + NAD(+) + 4 H(+)(out). In terms of biological role, core subunit of the mitochondrial membrane respiratory chain NADH dehydrogenase (Complex I) which catalyzes electron transfer from NADH through the respiratory chain, using ubiquinone as an electron acceptor. Part of the enzyme membrane arm which is embedded in the lipid bilayer and involved in proton translocation. The chain is NADH-ubiquinone oxidoreductase chain 4L (MT-ND4L) from Cephalopachus bancanus (Western tarsier).